The following is an 87-amino-acid chain: Small ribosomal subunit protein bS20 (87 aa).

Basic residues predominate over residues 1 to 12 (MANHKSALKRNR). The interval 1 to 21 (MANHKSALKRNRQAAVRNARN) is disordered.

Belongs to the bacterial ribosomal protein bS20 family.

In terms of biological role, binds directly to 16S ribosomal RNA. This chain is Small ribosomal subunit protein bS20, found in Syntrophotalea carbinolica (strain DSM 2380 / NBRC 103641 / GraBd1) (Pelobacter carbinolicus).